The following is a 260-amino-acid chain: Outer membrane protein assembly factor BamD (260 aa).

Positions 1 to 19 (MRKLKSFTFIALTAFAITA) are cleaved as a signal peptide. Cys20 is lipidated: N-palmitoyl cysteine. Cys20 carries S-diacylglycerol cysteine lipidation.

Belongs to the BamD family. As to quaternary structure, part of the Bam complex.

The protein localises to the cell outer membrane. Functionally, part of the outer membrane protein assembly complex, which is involved in assembly and insertion of beta-barrel proteins into the outer membrane. This is Outer membrane protein assembly factor BamD from Pasteurella multocida (strain Pm70).